Consider the following 396-residue polypeptide: Elongation factor Tu (396 aa).

One can recognise a tr-type G domain in the interval 10 to 205 (KSHANIGTIG…AVDEYIPTPE (196 aa)). Residues 19 to 26 (GHVDHGKT) are G1. Residue 19-26 (GHVDHGKT) participates in GTP binding. Thr26 is a Mg(2+) binding site. The segment at 61-65 (GITIS) is G2. The tract at residues 82–85 (DCPG) is G3. Residues 82–86 (DCPGH) and 137–140 (NKCD) each bind GTP. Residues 137 to 140 (NKCD) are G4. Residues 175 to 177 (SAL) form a G5 region. Thr385 bears the Phosphothreonine mark.

The protein belongs to the TRAFAC class translation factor GTPase superfamily. Classic translation factor GTPase family. EF-Tu/EF-1A subfamily. In terms of assembly, monomer. Interacts with BrxC. In terms of processing, phosphorylated on Thr-385 in vitro by PrkC in the presence of poly-L-lysine or myelin basic protein, dephosphorylated by PrpC.

Its subcellular location is the cytoplasm. It carries out the reaction GTP + H2O = GDP + phosphate + H(+). In terms of biological role, GTP hydrolase that promotes the GTP-dependent binding of aminoacyl-tRNA to the A-site of ribosomes during protein biosynthesis. This is Elongation factor Tu from Bacillus subtilis (strain 168).